Reading from the N-terminus, the 154-residue chain is Interleukin-2 (154 aa).

The signal sequence occupies residues 1-20 (MYRMQLLSCIALSLALVTNS). O-linked (GalNAc...) threonine glycosylation occurs at threonine 23. Cysteine 78 and cysteine 126 are disulfide-bonded.

Belongs to the IL-2 family.

It localises to the secreted. In terms of biological role, cytokine produced by activated CD4-positive helper T-cells and to a lesser extend activated CD8-positive T-cells and natural killer (NK) cells that plays pivotal roles in the immune response and tolerance. Binds to a receptor complex composed of either the high-affinity trimeric IL-2R (IL2RA/CD25, IL2RB/CD122 and IL2RG/CD132) or the low-affinity dimeric IL-2R (IL2RB and IL2RG). Interaction with the receptor leads to oligomerization and conformation changes in the IL-2R subunits resulting in downstream signaling starting with phosphorylation of JAK1 and JAK3. In turn, JAK1 and JAK3 phosphorylate the receptor to form a docking site leading to the phosphorylation of several substrates including STAT5. This process leads to activation of several pathways including STAT, phosphoinositide-3-kinase/PI3K and mitogen-activated protein kinase/MAPK pathways. Functions as a T-cell growth factor and can increase NK-cell cytolytic activity as well. Promotes strong proliferation of activated B-cells and subsequently immunoglobulin production. Plays a pivotal role in regulating the adaptive immune system by controlling the survival and proliferation of regulatory T-cells, which are required for the maintenance of immune tolerance. Moreover, participates in the differentiation and homeostasis of effector T-cell subsets, including Th1, Th2, Th17 as well as memory CD8-positive T-cells. This Papio anubis (Olive baboon) protein is Interleukin-2 (IL2).